The chain runs to 322 residues: 4-hydroxythreonine-4-phosphate dehydrogenase (322 aa).

Thr132 contacts substrate. Residues His160, His205, and His260 each coordinate a divalent metal cation. 3 residues coordinate substrate: Lys268, Asn277, and Arg286.

The protein belongs to the PdxA family. In terms of assembly, homodimer. The cofactor is Zn(2+). Mg(2+) serves as cofactor. Co(2+) is required as a cofactor.

The protein localises to the cytoplasm. The catalysed reaction is 4-(phosphooxy)-L-threonine + NAD(+) = 3-amino-2-oxopropyl phosphate + CO2 + NADH. It participates in cofactor biosynthesis; pyridoxine 5'-phosphate biosynthesis; pyridoxine 5'-phosphate from D-erythrose 4-phosphate: step 4/5. In terms of biological role, catalyzes the NAD(P)-dependent oxidation of 4-(phosphooxy)-L-threonine (HTP) into 2-amino-3-oxo-4-(phosphooxy)butyric acid which spontaneously decarboxylates to form 3-amino-2-oxopropyl phosphate (AHAP). This Xanthomonas campestris pv. campestris (strain B100) protein is 4-hydroxythreonine-4-phosphate dehydrogenase.